Here is a 1066-residue protein sequence, read N- to C-terminus: Elongation factor 3 (1066 aa).

6 HEAT repeats span residues 112–149 (FIFE…VMSP), 151–188 (AAQQ…ACPE), 192–229 (ALMP…LISN), 231–268 (DIER…EVDS), 269–306 (ATLA…LVDN), and 312–353 (PFLG…VTGD). Position 418 (T418) interacts with ADP. ABC transporter domains lie at 454-672 (EEGE…YAEL) and 699-1015 (IKMK…KKEE). Positions 735, 944, 947, and 973 each coordinate ADP. The tract at residues 997-1066 (GHDWTESNSK…YDSADELEDL (70 aa)) is disordered. Residues 1042–1054 (RKAKKDRMARKKA) show a composition bias toward basic residues.

The protein belongs to the ABC transporter superfamily. ABCF family. EF3 subfamily.

It localises to the cytoplasm. It is found in the cytosol. It catalyses the reaction ATP + H2O = ADP + phosphate + H(+). Its pathway is protein biosynthesis; polypeptide chain elongation. Functionally, ribosome-dependent ATPase that functions in cytoplasmic translation elongation. Required for the ATP-dependent release of deacylated tRNA from the ribosomal E-site during protein biosynthesis. Stimulates the eEF1A-dependent binding of aminoacyl-tRNA to the ribosomal A-site, which has reduced affinity for tRNA as long as the E-site is occupied. Assists translation termination by stimulating the release of nascent protein from the ribosome by release factors. The polypeptide is Elongation factor 3 (Mycosarcoma maydis (Corn smut fungus)).